A 961-amino-acid polypeptide reads, in one-letter code: Glycine dehydrogenase (decarboxylating) (961 aa).

At K709 the chain carries N6-(pyridoxal phosphate)lysine.

This sequence belongs to the GcvP family. The glycine cleavage system is composed of four proteins: P, T, L and H. Pyridoxal 5'-phosphate serves as cofactor.

It carries out the reaction N(6)-[(R)-lipoyl]-L-lysyl-[glycine-cleavage complex H protein] + glycine + H(+) = N(6)-[(R)-S(8)-aminomethyldihydrolipoyl]-L-lysyl-[glycine-cleavage complex H protein] + CO2. The glycine cleavage system catalyzes the degradation of glycine. The P protein binds the alpha-amino group of glycine through its pyridoxal phosphate cofactor; CO(2) is released and the remaining methylamine moiety is then transferred to the lipoamide cofactor of the H protein. The polypeptide is Glycine dehydrogenase (decarboxylating) (Streptomyces griseus subsp. griseus (strain JCM 4626 / CBS 651.72 / NBRC 13350 / KCC S-0626 / ISP 5235)).